Reading from the N-terminus, the 329-residue chain is Lipoyl synthase (329 aa).

Residues C55, C60, C66, C81, C85, C88, and S292 each coordinate [4Fe-4S] cluster. The Radical SAM core domain maps to 67–281 (WEDREATFLI…KAEAEAIGFL (215 aa)).

The protein belongs to the radical SAM superfamily. Lipoyl synthase family. [4Fe-4S] cluster is required as a cofactor.

The protein localises to the cytoplasm. It catalyses the reaction [[Fe-S] cluster scaffold protein carrying a second [4Fe-4S](2+) cluster] + N(6)-octanoyl-L-lysyl-[protein] + 2 oxidized [2Fe-2S]-[ferredoxin] + 2 S-adenosyl-L-methionine + 4 H(+) = [[Fe-S] cluster scaffold protein] + N(6)-[(R)-dihydrolipoyl]-L-lysyl-[protein] + 4 Fe(3+) + 2 hydrogen sulfide + 2 5'-deoxyadenosine + 2 L-methionine + 2 reduced [2Fe-2S]-[ferredoxin]. It functions in the pathway protein modification; protein lipoylation via endogenous pathway; protein N(6)-(lipoyl)lysine from octanoyl-[acyl-carrier-protein]: step 2/2. In terms of biological role, catalyzes the radical-mediated insertion of two sulfur atoms into the C-6 and C-8 positions of the octanoyl moiety bound to the lipoyl domains of lipoate-dependent enzymes, thereby converting the octanoylated domains into lipoylated derivatives. In Clavibacter sepedonicus (Clavibacter michiganensis subsp. sepedonicus), this protein is Lipoyl synthase.